The sequence spans 132 residues: Small ribosomal subunit protein uS8 (132 aa).

Belongs to the universal ribosomal protein uS8 family. Part of the 30S ribosomal subunit. Contacts proteins S5 and S12.

Its function is as follows. One of the primary rRNA binding proteins, it binds directly to 16S rRNA central domain where it helps coordinate assembly of the platform of the 30S subunit. The chain is Small ribosomal subunit protein uS8 from Aliarcobacter butzleri (strain RM4018) (Arcobacter butzleri).